Reading from the N-terminus, the 838-residue chain is Probable beta-glucosidase I (838 aa).

Asn-197 is a glycosylation site (N-linked (GlcNAc...) asparagine). The active site involves Asp-225. The 161-residue stretch at Asp-395 to Ala-555 folds into the PA14 domain. Residue Asn-493 is glycosylated (N-linked (GlcNAc...) asparagine).

It belongs to the glycosyl hydrolase 3 family.

The protein localises to the secreted. It catalyses the reaction Hydrolysis of terminal, non-reducing beta-D-glucosyl residues with release of beta-D-glucose.. Its pathway is glycan metabolism; cellulose degradation. In terms of biological role, beta-glucosidases are one of a number of cellulolytic enzymes involved in the degradation of cellulosic biomass. Catalyzes the last step releasing glucose from the inhibitory cellobiose. This is Probable beta-glucosidase I (bglI) from Neosartorya fischeri (strain ATCC 1020 / DSM 3700 / CBS 544.65 / FGSC A1164 / JCM 1740 / NRRL 181 / WB 181) (Aspergillus fischerianus).